Consider the following 319-residue polypeptide: Ribonuclease Z (319 aa).

Zn(2+) is bound by residues histidine 62, histidine 64, aspartate 66, histidine 67, histidine 145, aspartate 216, and histidine 274. Residue aspartate 66 is the Proton acceptor of the active site.

This sequence belongs to the RNase Z family. As to quaternary structure, homodimer. The cofactor is Zn(2+).

It catalyses the reaction Endonucleolytic cleavage of RNA, removing extra 3' nucleotides from tRNA precursor, generating 3' termini of tRNAs. A 3'-hydroxy group is left at the tRNA terminus and a 5'-phosphoryl group is left at the trailer molecule.. In terms of biological role, zinc phosphodiesterase, which displays some tRNA 3'-processing endonuclease activity. Probably involved in tRNA maturation, by removing a 3'-trailer from precursor tRNA. This Parasynechococcus marenigrum (strain WH8102) protein is Ribonuclease Z.